The following is a 145-amino-acid chain: Putative pre-16S rRNA nuclease (145 aa).

This sequence belongs to the YqgF nuclease family.

It is found in the cytoplasm. Functionally, could be a nuclease involved in processing of the 5'-end of pre-16S rRNA. In Levilactobacillus brevis (strain ATCC 367 / BCRC 12310 / CIP 105137 / JCM 1170 / LMG 11437 / NCIMB 947 / NCTC 947) (Lactobacillus brevis), this protein is Putative pre-16S rRNA nuclease.